Consider the following 481-residue polypeptide: Trigger factor (481 aa).

In terms of domain architecture, PPIase FKBP-type spans 174–261; it reads GDIAVVGFKG…LKDLKTRELP (88 aa). Residues 430–481 form a disordered region; the sequence is ENSTVTEKAPEAESDAAKASKPAAAKKDASKAKTAKTSKAKTAKAESESAES. Basic and acidic residues predominate over residues 437–447; that stretch reads KAPEAESDAAK. The segment covering 462–471 has biased composition (basic residues); that stretch reads KTAKTSKAKT. Positions 472–481 are enriched in basic and acidic residues; that stretch reads AKAESESAES.

Belongs to the FKBP-type PPIase family. Tig subfamily.

The protein resides in the cytoplasm. It catalyses the reaction [protein]-peptidylproline (omega=180) = [protein]-peptidylproline (omega=0). Involved in protein export. Acts as a chaperone by maintaining the newly synthesized protein in an open conformation. Functions as a peptidyl-prolyl cis-trans isomerase. In Synechococcus sp. (strain WH7803), this protein is Trigger factor.